The primary structure comprises 589 residues: Aspartate--tRNA ligase (589 aa).

Position 172 (Glu172) interacts with L-aspartate. Residues 196–199 form an aspartate region; it reads QLFK. Residue Arg218 participates in L-aspartate binding. Residues 218–220 and Gln227 each bind ATP; that span reads RDE. His449 is an L-aspartate binding site. Glu483 is a binding site for ATP. Arg490 contacts L-aspartate. 535–538 lines the ATP pocket; the sequence is GLDR.

It belongs to the class-II aminoacyl-tRNA synthetase family. Type 1 subfamily. As to quaternary structure, homodimer.

It localises to the cytoplasm. The enzyme catalyses tRNA(Asp) + L-aspartate + ATP = L-aspartyl-tRNA(Asp) + AMP + diphosphate. In terms of biological role, catalyzes the attachment of L-aspartate to tRNA(Asp) in a two-step reaction: L-aspartate is first activated by ATP to form Asp-AMP and then transferred to the acceptor end of tRNA(Asp). The polypeptide is Aspartate--tRNA ligase (Haemophilus ducreyi (strain 35000HP / ATCC 700724)).